The sequence spans 384 residues: Chaperone protein DnaJ (384 aa).

Residues 6–71 (DYYEVLGISK…TKRKTYDQFG (66 aa)) enclose the J domain. The segment at 141-223 (GKKMSIKVNR…CHGTGNTRKV (83 aa)) adopts a CR-type zinc-finger fold. Positions 154, 157, 171, 174, 197, 200, 211, and 214 each coordinate Zn(2+). CXXCXGXG motif repeat units lie at residues 154–161 (CEECNGTG), 171–178 (CSTCNGTG), 197–204 (CSACNGTG), and 211–218 (CSKCHGTG).

The protein belongs to the DnaJ family. As to quaternary structure, homodimer. Zn(2+) is required as a cofactor.

Its subcellular location is the cytoplasm. Participates actively in the response to hyperosmotic and heat shock by preventing the aggregation of stress-denatured proteins and by disaggregating proteins, also in an autonomous, DnaK-independent fashion. Unfolded proteins bind initially to DnaJ; upon interaction with the DnaJ-bound protein, DnaK hydrolyzes its bound ATP, resulting in the formation of a stable complex. GrpE releases ADP from DnaK; ATP binding to DnaK triggers the release of the substrate protein, thus completing the reaction cycle. Several rounds of ATP-dependent interactions between DnaJ, DnaK and GrpE are required for fully efficient folding. Also involved, together with DnaK and GrpE, in the DNA replication of plasmids through activation of initiation proteins. The protein is Chaperone protein DnaJ of Clostridioides difficile (strain 630) (Peptoclostridium difficile).